The chain runs to 322 residues: MSDVRNVIIIGSGPAGYTAALYTARASLQPLVFEGAVTAGGALMNTTDVENFPGFRDGIMGPDLMDNMRAQAERFGAELIPDDVVSVDLTGDIKTVTDSAGTVHRAKAVIVTTGSQHRKLGLPREDALSGRGVSWCATCDGFFFKDQDIVVVGGGDTAMEEATFLSRFAKSVTIVHRRDSLRASKAMQDRAFADPKISFAWNSEVATIHGEQKLTGLTLRDTKTGETRELAATGLFIAVGHDPRTELFKGQLDLDDEGYLKVASPSTRTNLTGVFAAGDVVDHTYRQAITAAGTGCSAALDAERYLAALADSEQIAEPAPAV.

Residues 12–15, 34–42, Asn-51, and Val-84 each bind FAD; these read SGPA and EGAVTAGGA. Cysteines 136 and 139 form a disulfide. NADP(+) contacts are provided by His-176, Arg-182, and Tyr-259. Residues Asp-279 and 286 to 289 contribute to the FAD site; that span reads RQAI. Residue Arg-286 participates in NADP(+) binding.

Belongs to the class-II pyridine nucleotide-disulfide oxidoreductase family. As to quaternary structure, homodimer. It depends on FAD as a cofactor.

The catalysed reaction is [thioredoxin]-dithiol + NADP(+) = [thioredoxin]-disulfide + NADPH + H(+). Functionally, component of the thioredoxin-thioredoxin reductase system which may be involved in biosynthesis of penicillins and cephalosporins and may be important in determining the thiol-disulfide redox balance. In Streptomyces clavuligerus, this protein is Thioredoxin reductase.